Reading from the N-terminus, the 262-residue chain is Ribose-5-phosphate isomerase A (262 aa).

Residues 33–36 (TGST), 89–92 (DGAD), and 102–105 (KGGG) contribute to the substrate site. Glu-111 acts as the Proton acceptor in catalysis. Lys-129 is a binding site for substrate.

It belongs to the ribose 5-phosphate isomerase family. In terms of assembly, homodimer.

It carries out the reaction aldehydo-D-ribose 5-phosphate = D-ribulose 5-phosphate. Its pathway is carbohydrate degradation; pentose phosphate pathway; D-ribose 5-phosphate from D-ribulose 5-phosphate (non-oxidative stage): step 1/1. In terms of biological role, catalyzes the reversible conversion of ribose-5-phosphate to ribulose 5-phosphate. The protein is Ribose-5-phosphate isomerase A of Ruegeria sp. (strain TM1040) (Silicibacter sp.).